We begin with the raw amino-acid sequence, 47 residues long: Protein DVU_0533 (47 aa).

A helical membrane pass occupies residues 18-37 (WTYILMGVTLLVYVGYWLFL).

The protein localises to the cell membrane. Functionally, HMWC (high-molecular-weight cytochrome c), ORF2, ORF3, ORF4, ORF5 and ORF6 in the HMC operon form a transmembrane protein complex that allows electron flow from the periplasmic hydrogenase to the cytoplasmic enzymes that catalyze reduction of sulfates. The protein is Protein DVU_0533 of Nitratidesulfovibrio vulgaris (strain ATCC 29579 / DSM 644 / CCUG 34227 / NCIMB 8303 / VKM B-1760 / Hildenborough) (Desulfovibrio vulgaris).